The chain runs to 601 residues: Probable N-acetylgalactosaminyltransferase 7 (601 aa).

Residues 1–20 (MIIARKKLQLQRLWRQRGCR) are Cytoplasmic-facing. Residues 21–38 (VATYICLGVLVLFGFVYN) traverse the membrane as a helical; Signal-anchor for type II membrane protein segment. Residues 39–601 (SKGNSMSSIK…FVWKEFYQSS (563 aa)) lie on the Lumenal side of the membrane. The interval 61 to 108 (DLTNKELPGGPDPNTIFRGSELGNYEPKEPEIPSNQPGEHGKPVPVTD) is disordered. A glycan (N-linked (GlcNAc...) asparagine) is linked at Asn-135. Cystine bridges form between Cys-146/Cys-382, Cys-373/Cys-452, Cys-490/Cys-506, Cys-529/Cys-542, and Cys-568/Cys-583. Positions 155 to 265 (LPTVSVVVVF…TNWLPPLLAP (111 aa)) are catalytic subdomain A. Substrate is bound by residues Asp-196 and Arg-226. Mn(2+) contacts are provided by Asp-249 and His-251. The interval 328 to 390 (PFRSPTHAGG…PCSHVGHVYR (63 aa)) is catalytic subdomain B. Residue Trp-359 coordinates substrate. His-387 contacts Mn(2+). Substrate is bound by residues Arg-390 and Tyr-395. In terms of domain architecture, Ricin B-type lectin spans 477–595 (DVWGEARNPA…DNERQKFVWK (119 aa)).

This sequence belongs to the glycosyltransferase 2 family. GalNAc-T subfamily. Requires Mn(2+) as cofactor.

Its subcellular location is the golgi apparatus membrane. It participates in protein modification; protein glycosylation. In terms of biological role, probable glycopeptide transferase involved in O-linked oligosaccharide biosynthesis. Glycopeptide transferases catalyze the transfer of an N-acetyl-D-galactosamine residue to an already glycosylated peptide. In contrast to other members of the family, it does not act as a peptide transferase that transfers GalNAc onto serine or threonine residue on peptides that have been tested. Some peptide transferase activity is however not excluded, considering that its appropriate peptide substrate may remain unidentified. This is Probable N-acetylgalactosaminyltransferase 7 (gly-7) from Caenorhabditis elegans.